Reading from the N-terminus, the 447-residue chain is Probable glycine dehydrogenase (decarboxylating) subunit 1 (447 aa).

This sequence belongs to the GcvP family. N-terminal subunit subfamily. As to quaternary structure, the glycine cleavage system is composed of four proteins: P, T, L and H. In this organism, the P 'protein' is a heterodimer of two subunits.

The catalysed reaction is N(6)-[(R)-lipoyl]-L-lysyl-[glycine-cleavage complex H protein] + glycine + H(+) = N(6)-[(R)-S(8)-aminomethyldihydrolipoyl]-L-lysyl-[glycine-cleavage complex H protein] + CO2. In terms of biological role, the glycine cleavage system catalyzes the degradation of glycine. The P protein binds the alpha-amino group of glycine through its pyridoxal phosphate cofactor; CO(2) is released and the remaining methylamine moiety is then transferred to the lipoamide cofactor of the H protein. The chain is Probable glycine dehydrogenase (decarboxylating) subunit 1 from Maricaulis maris (strain MCS10) (Caulobacter maris).